A 384-amino-acid polypeptide reads, in one-letter code: MKTLPGIGVFGTGNTARVLISLLRADGFSIEALWGKTDEEAKELAEEMGIPFYTCHTDDVLLHQEVDLVCISIPPPLTRQIAVKALGIGKNVICEKAASSIDAFTMVKAARYYPKLMSLVGNALRFLPAFDRMRQLILEQNYVGEIRICDVRVYGGSLLSSNYSWICDDLMGGGGLHTLGTYLVDLLTHLTNKRAEKVHGFLKTFVKQNEAISGIRYVTSDDFCFFQMQMTGGACSTVTLNFNMPGTFVHEVMVVGSAGRLVVRGTELFGQKNSASEEKLLLSDPLTREIADISDFEKVPPPYLMGIAHMVKALRQSFQDQEDRRTWDQKPLSVAATFEDGLYMQRVVDAIKRSNRSGEWESVELTNDETDSNQNLSEVIQHNL.

Residues 1 to 25 (MKTLPGIGVFGTGNTARVLISLLRA) form the signal peptide. Residues 358–384 (GEWESVELTNDETDSNQNLSEVIQHNL) are disordered. Residues 372–384 (SNQNLSEVIQHNL) show a composition bias toward polar residues.

It belongs to the Gfo/Idh/MocA family.

It localises to the secreted. It is found in the extracellular space. Its subcellular location is the extracellular matrix. Its function is as follows. Promotes matrix assembly. In Xenopus tropicalis (Western clawed frog), this protein is Glucose-fructose oxidoreductase domain-containing protein 2 (gfod2).